Reading from the N-terminus, the 353-residue chain is F-box protein At2g14290 (353 aa).

Residues 6–58 form the F-box domain; it reads PRTWSELPPDLLGSIFHRLSFTDFHRAKIVCWNWNLSSKLTVPKKIRSPWLML.

The chain is F-box protein At2g14290 from Arabidopsis thaliana (Mouse-ear cress).